The following is a 536-amino-acid chain: Apoptosis inhibitor 5 homolog (536 aa).

Residues 462–536 (ITFGEKAAAN…GYRNRRFNKY (75 aa)) form a disordered region. Residues 472–487 (GKDKDQEPEKKSRPSN) are compositionally biased toward basic and acidic residues. Positions 498–507 (KYSNKVNQSY) are enriched in polar residues. Gly residues predominate over residues 516–528 (RGGGGGGGSGGGY).

It belongs to the API5 family.

It is found in the nucleus. Antiapoptotic factor. Also known to efficiently suppress E2F1-induced apoptosis. In Drosophila melanogaster (Fruit fly), this protein is Apoptosis inhibitor 5 homolog.